Reading from the N-terminus, the 271-residue chain is Extracellular metalloprotease ARB_05317 (271 aa).

A signal peptide spans 1-19 (MRFSVLLTGLAAAGSIATA). N-linked (GlcNAc...) asparagine glycosylation occurs at N136. H185 provides a ligand contact to Zn(2+). E186 is a catalytic residue. H189 contacts Zn(2+). The N-linked (GlcNAc...) asparagine glycan is linked to N200. An intrachain disulfide couples C222 to C248.

This sequence belongs to the peptidase M43B family.

The protein localises to the secreted. Functionally, secreted metalloproteinase that allows assimilation of proteinaceous substrates. Plays a pivotal role as a pathogenicity determinant during infections and contributes to the ability of the pathogen to persist within the mammalian host. The protein is Extracellular metalloprotease ARB_05317 of Arthroderma benhamiae (strain ATCC MYA-4681 / CBS 112371) (Trichophyton mentagrophytes).